A 390-amino-acid chain; its full sequence is Transforming growth factor beta-1 proprotein (390 aa).

An N-terminal signal peptide occupies residues 1-29 (MPPSGLRLLPLLLPLLWLLVLTPGRPAAG). The interval 30 to 74 (LSTCKTIDMELVKRKRIEAIRGQILSKLRLASPPSQGEVPPGPLP) is straightjacket domain. Residues 75-271 (EAVLALYNST…ATPLERAQQL (197 aa)) form an arm domain region. N-linked (GlcNAc...) asparagine glycosylation is found at asparagine 82, asparagine 136, and asparagine 176. The bowtie tail stretch occupies residues 226–252 (DSKDNTLRVGINGFSSSRRGDLATIDG). A Cell attachment site motif is present at residues 244–246 (RGD). Cystine bridges form between cysteine 285/cysteine 294, cysteine 293/cysteine 356, cysteine 322/cysteine 387, and cysteine 326/cysteine 389.

This sequence belongs to the TGF-beta family. As to quaternary structure, homodimer; disulfide-linked. Interacts with the serine proteases, HTRA1 and HTRA3: the interaction with either inhibits TGFB1-mediated signaling and the HTRA protease activity is required for this inhibition. May interact with THSD4; this interaction may lead to sequestration by FBN1 microfibril assembly and attenuation of TGFB signaling. Interacts with CD109, DPT and ASPN. Interacts with EFEMP2. Interacts with TSKU; the interaction contributes to regulation of the hair cycle. Interacts with TGFBR3. In terms of assembly, homodimer; disulfide-linked. Interacts with transforming growth factor beta-1 (TGF-beta-1) chain; interaction is non-covalent and maintains TGF-beta-1 in a latent state; each latency-associated peptide (LAP) monomer interacts with TGF-beta-1 in the other monomer. Interacts with LTBP1; leading to regulation of TGF-beta-1 activation. Interacts with LRRC32/GARP; leading to regulation of TGF-beta-1 activation on the surface of activated regulatory T-cells (Tregs). Interacts with LRRC33/NRROS; leading to regulation of TGF-beta-1 activation in macrophages and microglia. Interacts (via cell attachment site) with integrins ITGAV and ITGB6 (ITGAV:ITGB6), leading to release of the active TGF-beta-1. Latency-associated peptide: Interacts with NREP; the interaction results in a decrease in TGFB1 autoinduction. Interacts with HSP90AB1; inhibits latent TGFB1 activation. Homodimer; disulfide-linked. Interacts with TGF-beta receptors (TGFBR1 and TGFBR2), leading to signal transduction. Post-translationally, transforming growth factor beta-1 proprotein: The precursor proprotein is cleaved in the Golgi apparatus by FURIN to form Transforming growth factor beta-1 (TGF-beta-1) and Latency-associated peptide (LAP) chains, which remain non-covalently linked, rendering TGF-beta-1 inactive. N-glycosylated. Deglycosylation leads to activation of Transforming growth factor beta-1 (TGF-beta-1); mechanisms triggering deglycosylation-driven activation of TGF-beta-1 are however unclear.

The protein resides in the secreted. It is found in the extracellular space. The protein localises to the extracellular matrix. In terms of biological role, transforming growth factor beta-1 proprotein: Precursor of the Latency-associated peptide (LAP) and Transforming growth factor beta-1 (TGF-beta-1) chains, which constitute the regulatory and active subunit of TGF-beta-1, respectively. Required to maintain the Transforming growth factor beta-1 (TGF-beta-1) chain in a latent state during storage in extracellular matrix. Associates non-covalently with TGF-beta-1 and regulates its activation via interaction with 'milieu molecules', such as LTBP1, LRRC32/GARP and LRRC33/NRROS, that control activation of TGF-beta-1. Interaction with LRRC33/NRROS regulates activation of TGF-beta-1 in macrophages and microglia. Interaction with LRRC32/GARP controls activation of TGF-beta-1 on the surface of activated regulatory T-cells (Tregs). Interaction with integrins (ITGAV:ITGB6 or ITGAV:ITGB8) results in distortion of the Latency-associated peptide chain and subsequent release of the active TGF-beta-1. Functionally, multifunctional protein that regulates the growth and differentiation of various cell types and is involved in various processes, such as normal development, immune function, microglia function and responses to neurodegeneration. Activation into mature form follows different steps: following cleavage of the proprotein in the Golgi apparatus, Latency-associated peptide (LAP) and Transforming growth factor beta-1 (TGF-beta-1) chains remain non-covalently linked rendering TGF-beta-1 inactive during storage in extracellular matrix. At the same time, LAP chain interacts with 'milieu molecules', such as LTBP1, LRRC32/GARP and LRRC33/NRROS that control activation of TGF-beta-1 and maintain it in a latent state during storage in extracellular milieus. TGF-beta-1 is released from LAP by integrins (ITGAV:ITGB6 or ITGAV:ITGB8): integrin-binding to LAP stabilizes an alternative conformation of the LAP bowtie tail and results in distortion of the LAP chain and subsequent release of the active TGF-beta-1. Once activated following release of LAP, TGF-beta-1 acts by binding to TGF-beta receptors (TGFBR1 and TGFBR2), which transduce signal. While expressed by many cells types, TGF-beta-1 only has a very localized range of action within cell environment thanks to fine regulation of its activation by Latency-associated peptide chain (LAP) and 'milieu molecules'. Plays an important role in bone remodeling: acts as a potent stimulator of osteoblastic bone formation, causing chemotaxis, proliferation and differentiation in committed osteoblasts. Can promote either T-helper 17 cells (Th17) or regulatory T-cells (Treg) lineage differentiation in a concentration-dependent manner. At high concentrations, leads to FOXP3-mediated suppression of RORC and down-regulation of IL-17 expression, favoring Treg cell development. At low concentrations in concert with IL-6 and IL-21, leads to expression of the IL-17 and IL-23 receptors, favoring differentiation to Th17 cells. Stimulates sustained production of collagen through the activation of CREB3L1 by regulated intramembrane proteolysis (RIP). Mediates SMAD2/3 activation by inducing its phosphorylation and subsequent translocation to the nucleus. Positively regulates odontoblastic differentiation in dental papilla cells, via promotion of IPO7-mediated translocation of phosphorylated SMAD2 to the nucleus and subsequent transcription of target genes. Can induce epithelial-to-mesenchymal transition (EMT) and cell migration in various cell types. The sequence is that of Transforming growth factor beta-1 proprotein (TGFB1) from Equus caballus (Horse).